Consider the following 203-residue polypeptide: Thymidine kinase (203 aa).

ATP-binding positions include 21–28 (GCMFAGKT) and 99–102 (DEIQ). The Proton acceptor role is filled by Glu-100. Residues Cys-156, Cys-159, Cys-194, and Cys-197 each coordinate Zn(2+).

The protein belongs to the thymidine kinase family. Homotetramer.

Its subcellular location is the cytoplasm. The enzyme catalyses thymidine + ATP = dTMP + ADP + H(+). The chain is Thymidine kinase from Mesoplasma florum (strain ATCC 33453 / NBRC 100688 / NCTC 11704 / L1) (Acholeplasma florum).